A 306-amino-acid chain; its full sequence is Probable pinoresinol-lariciresinol reductase 3 (306 aa).

NADP(+) contacts are provided by residues 14-20, Arg39, and Lys46; that span reads GATGRLG. Lys131 (proton acceptor) is an active-site residue. Arg135 serves as a coordination point for NADP(+).

It belongs to the NmrA-type oxidoreductase family. Isoflavone reductase subfamily. As to quaternary structure, dimer.

Functionally, probable reductase that might be involved in the reduction of lariciresinol into secoisolariciresinol. In most plant species, a single enzyme is able to reduce both pinoresinol and lariciresinol efficiently while in Arabidopsis, PRR1 and PRR2 show a strict substrate selectivity for pinoresinol. This chain is Probable pinoresinol-lariciresinol reductase 3 (PLR3), found in Arabidopsis thaliana (Mouse-ear cress).